The primary structure comprises 188 residues: GMP synthase [glutamine-hydrolyzing] subunit A (188 aa).

Residues 1-188 (MIVIMDNGGQ…RNFAELCGEL (188 aa)) enclose the Glutamine amidotransferase type-1 domain. The active-site Nucleophile is C78. Catalysis depends on residues H165 and E167.

Heterodimer composed of a glutamine amidotransferase subunit (A) and a GMP-binding subunit (B).

The enzyme catalyses XMP + L-glutamine + ATP + H2O = GMP + L-glutamate + AMP + diphosphate + 2 H(+). It participates in purine metabolism; GMP biosynthesis; GMP from XMP (L-Gln route): step 1/1. Catalyzes the synthesis of GMP from XMP. This chain is GMP synthase [glutamine-hydrolyzing] subunit A, found in Thermococcus kodakarensis (strain ATCC BAA-918 / JCM 12380 / KOD1) (Pyrococcus kodakaraensis (strain KOD1)).